The primary structure comprises 124 residues: MVRISGVDLPRNKRIQIGLTSIFGIGNTSADKILTTANLSPDIRCSDLTDEQVSSLRTIIDESYQTEGDLRRVYSLNIKRLTEIGSAAGRRHRVNLPVRGQRTRTNARTRKGKVKTAVAKKKGR.

The segment at 100 to 124 (GQRTRTNARTRKGKVKTAVAKKKGR) is disordered. Basic residues predominate over residues 101-124 (QRTRTNARTRKGKVKTAVAKKKGR).

It belongs to the universal ribosomal protein uS13 family. In terms of assembly, part of the 30S ribosomal subunit.

The protein localises to the plastid. It localises to the chloroplast. Its function is as follows. Located at the top of the head of the 30S subunit, it contacts several helices of the 16S rRNA. The sequence is that of Small ribosomal subunit protein uS13c from Emiliania huxleyi (Coccolithophore).